Reading from the N-terminus, the 65-residue chain is Large ribosomal subunit protein bL35 (65 aa).

Disordered regions lie at residues 1 to 23 and 36 to 65; these read MPKLKTKSGAAKRFKKTGKGGFK and MTTKRKRHLRGMNQVAKVDTTSLVQQMPYA. Positions 54-65 are enriched in polar residues; the sequence is DTTSLVQQMPYA.

It belongs to the bacterial ribosomal protein bL35 family.

The sequence is that of Large ribosomal subunit protein bL35 from Francisella tularensis subsp. tularensis (strain FSC 198).